The sequence spans 441 residues: Glutamate--tRNA ligase 2 (441 aa).

The 'HIGH' region motif lies at 9–19 (PSPTGYIHVGN). Positions 239–243 (ALSKR) match the 'KMSKS' region motif. Residue lysine 242 participates in ATP binding.

The protein belongs to the class-I aminoacyl-tRNA synthetase family. Glutamate--tRNA ligase type 1 subfamily. As to quaternary structure, monomer.

The protein localises to the cytoplasm. The enzyme catalyses tRNA(Glu) + L-glutamate + ATP = L-glutamyl-tRNA(Glu) + AMP + diphosphate. In terms of biological role, catalyzes the attachment of glutamate to tRNA(Glu) in a two-step reaction: glutamate is first activated by ATP to form Glu-AMP and then transferred to the acceptor end of tRNA(Glu). This Cereibacter sphaeroides (strain ATCC 17029 / ATH 2.4.9) (Rhodobacter sphaeroides) protein is Glutamate--tRNA ligase 2.